The primary structure comprises 110 residues: Small EDRK-rich factor 1 (110 aa).

Residues 1-30 (MARGNQRELARQKNMKKTQEISKGKRKEDS) show a composition bias toward basic and acidic residues. A disordered region spans residues 1–61 (MARGNQRELA…GPHLPLKAPR (61 aa)). Positions 11 to 17 (RQKNMKK) are required for SNCA binding. The span at 34–50 (SQRKQSSGGQKSESKMS) shows a compositional bias: low complexity.

Belongs to the SERF family. Interacts with SNCA; this interaction promotes the aggregation of SNCA. In terms of tissue distribution, isoform Long is predominantly expressed in heart, brain and skeletal muscle. Isoform Short and Isoform Long are expressed throughout the central nervous system, including spinal cord.

It is found in the cytoplasm. The protein resides in the cytosol. It localises to the nucleus. Positive regulator of amyloid protein aggregation and proteotoxicity. Induces conformational changes in amyloid proteins, such as APP, HTT, and SNCA, driving them into compact formations preceding the formation of aggregates. The chain is Small EDRK-rich factor 1 (SERF1A) from Homo sapiens (Human).